Consider the following 208-residue polypeptide: WEB family protein At2g17940 (208 aa).

Positions 78–113 form a coiled coil; sequence RTLQLNTSLSNRIKTLTQELELGKKEIQRLSRTRSS.

This sequence belongs to the WEB family.

The sequence is that of WEB family protein At2g17940 from Arabidopsis thaliana (Mouse-ear cress).